The chain runs to 630 residues: Phosphatidylinositol 4-kinase gamma 5 (630 aa).

A Ubiquitin-like; degenerate domain is found at 41–98 (RRVFVQTETGCVLGLELDRSDNAHTVKRKLQVALNFPIEESSLTFGDLVLKNDLTAVR). Residues 162 to 459 (GIDPVAVNSG…LIGEKDAESP (298 aa)) form the PI3K/PI4K catalytic domain. The segment at 168 to 174 (VNSGLGG) is G-loop. ATP is bound by residues 169-175 (NSGLGGA), Lys-190, and 279-282 (QQFI). Positions 312–320 (LNTDRHSGN) are catalytic loop. Positions 339-365 (PIDHGLCLPETLEDPYFEWIHWPQASI) are activation loop. An ATP-binding site is contributed by Asp-341. The disordered stretch occupies residues 500 to 527 (LSKVEETTEDGEEEEEEDREEEENDRAD). Residues 506-524 (TTEDGEEEEEEDREEEEND) are compositionally biased toward acidic residues. Ser-571 carries the post-translational modification Phosphoserine.

This sequence belongs to the PI3/PI4-kinase family. Type II PI4K subfamily. In terms of assembly, interacts with AHK2.

The catalysed reaction is a 1,2-diacyl-sn-glycero-3-phospho-(1D-myo-inositol) + ATP = a 1,2-diacyl-sn-glycero-3-phospho-(1D-myo-inositol 4-phosphate) + ADP + H(+). In terms of biological role, the phosphorylation of phosphatidylinositol (PI) to PI4P is the first committed step in the generation of phosphatidylinositol 4,5-bisphosphate (PIP2), a precursor of the second messenger inositol 1,4,5-trisphosphate (InsP3). This is Phosphatidylinositol 4-kinase gamma 5 (PI4KG5) from Arabidopsis thaliana (Mouse-ear cress).